Consider the following 226-residue polypeptide: UPF0758 protein SPT_1135 (226 aa).

The region spanning 103-225 (SILSSQKLAK…YFSYREKTDL (123 aa)) is the MPN domain. The Zn(2+) site is built by histidine 174, histidine 176, and aspartate 187. A JAMM motif motif is present at residues 174–187 (HNHPSGAVAPSQND).

This sequence belongs to the UPF0758 family.

In Streptococcus pneumoniae (strain Taiwan19F-14), this protein is UPF0758 protein SPT_1135.